The chain runs to 489 residues: Protein TOS4 (489 aa).

Composition is skewed to polar residues over residues 1–10 (MSSQFPSSPY) and 20–32 (NYKQQPNCPSSNY). The disordered stretch occupies residues 1-101 (MSSQFPSSPY…FSSKLSSPSR (101 aa)). Ser40 is subject to Phosphoserine. A compositionally biased stretch (polar residues) spans 56-68 (PSSSIGRVSSPVR). Positions 89 to 100 (SPKFSSKLSSPS) are enriched in low complexity. At Ser100 the chain carries Phosphoserine. One can recognise an FHA domain in the interval 118-170 (ITVGRNSSQCDVALCKNKFISRVHASITYLPQTNEVKIHCFSMNGLIVTYRKQ). The disordered stretch occupies residues 316–366 (SSPLSSVSSVDHEEQTLRQDSLSSDKNPMTMKKPKLNKRVLPSKPKKSVKE). Residues 333 to 342 (RQDSLSSDKN) are compositionally biased toward polar residues.

It belongs to the PLM2/TOS4 family. Post-translationally, phosphorylated by CDC28.

It localises to the nucleus. In terms of biological role, binds to the promoters of genes with functions important for the G1/S (start) transition; primarily genes involved in pheromone response, polarized growth and transcription. In Saccharomyces cerevisiae (strain ATCC 204508 / S288c) (Baker's yeast), this protein is Protein TOS4 (TOS4).